The primary structure comprises 194 residues: dTTP/UTP pyrophosphatase (194 aa).

D76 acts as the Proton acceptor in catalysis.

Belongs to the Maf family. YhdE subfamily. The cofactor is a divalent metal cation.

The protein localises to the cytoplasm. The catalysed reaction is dTTP + H2O = dTMP + diphosphate + H(+). It carries out the reaction UTP + H2O = UMP + diphosphate + H(+). Nucleoside triphosphate pyrophosphatase that hydrolyzes dTTP and UTP. May have a dual role in cell division arrest and in preventing the incorporation of modified nucleotides into cellular nucleic acids. This chain is dTTP/UTP pyrophosphatase, found in Shewanella oneidensis (strain ATCC 700550 / JCM 31522 / CIP 106686 / LMG 19005 / NCIMB 14063 / MR-1).